The primary structure comprises 238 residues: tRNA1(Val) (adenine(37)-N6)-methyltransferase (238 aa).

Belongs to the methyltransferase superfamily. tRNA (adenine-N(6)-)-methyltransferase family.

It localises to the cytoplasm. The enzyme catalyses adenosine(37) in tRNA1(Val) + S-adenosyl-L-methionine = N(6)-methyladenosine(37) in tRNA1(Val) + S-adenosyl-L-homocysteine + H(+). Its function is as follows. Specifically methylates the adenine in position 37 of tRNA(1)(Val) (anticodon cmo5UAC). The chain is tRNA1(Val) (adenine(37)-N6)-methyltransferase from Shewanella baltica (strain OS195).